Reading from the N-terminus, the 258-residue chain is MTAMPRIAFLASPAEPAVAARARLVQRYGDHALHDADIVCALGGDGFMLQTLHRHGAADKPVFGMKLGSVGFLMNQYRDDEDDLLARLQRAEPAHLRPLEMLVQTESGTSAGSLAYNEVSLLRQTRQAAHLSVDLNGQTRIAELIGDGVMVATPAGSTAYNYSAHGPILPLGSHTLALTPIAPYRPRRWRGAILKADTEVRFRVLDPYKRPVSVTADSHEIRDVVEVTIRESTERRVTLLFDPEHNLEERIFSEQFAV.

The active-site Proton acceptor is the D45. Residues 45-46 (DG), 117-118 (NE), D147, A155, 158-163 (TAYNYS), and A182 contribute to the NAD(+) site.

Belongs to the NAD kinase family. The cofactor is a divalent metal cation.

The protein resides in the cytoplasm. The enzyme catalyses NAD(+) + ATP = ADP + NADP(+) + H(+). Involved in the regulation of the intracellular balance of NAD and NADP, and is a key enzyme in the biosynthesis of NADP. Catalyzes specifically the phosphorylation on 2'-hydroxyl of the adenosine moiety of NAD to yield NADP. The sequence is that of NAD kinase from Xanthomonas campestris pv. campestris (strain 8004).